The primary structure comprises 1121 residues: tRNA (34-2'-O)-methyltransferase regulator WDR6 (1121 aa).

Met1 is subject to N-acetylmethionine. WD repeat units follow at residues 53-97 (IKRV…VVKI), 105-143 (WELW…LYDP), 147-189 (CILQ…VWYP), 200-238 (APDR…IWKV), 247-285 (RVQN…VWSH), 289-327 (ILQA…LWHL), 335-376 (LGVS…LYDV), 381-422 (WEQL…VVPI), 425-470 (PTAA…ISAA), 476-520 (IFVK…LFPS), 559-598 (PVST…FVRD), 604-642 (VLRQ…VWNP), 645-684 (HEKL…LYRA), 739-785 (LTDI…VWGI), 848-893 (RNRH…LFLL), 901-946 (QLLA…FWDL), 970-1012 (GTPS…VFVL), 1036-1073 (EEYS…FWRL), and 1079-1121 (TFMN…NWYD).

It belongs to the WD repeat WDR6 family. Interacts with FTSJ1; the interaction is direct, and required for 2'-O-methylation of position 34 in substrate tRNAs. Interacts with IRS4. Interacts with STK11/LKB1. Ubiquitous.

It localises to the cytoplasm. Together with methyltransferase FTSJ1, methylates the 2'-O-ribose of nucleotides at position 34 of the tRNA anticodon loop of substrate tRNAs. Required for the correct positioning of the substrate tRNA for methylation. Required to suppress amino acid starvation-induced autophagy. Enhances the STK11/LKB1-induced cell growth suppression activity. The chain is tRNA (34-2'-O)-methyltransferase regulator WDR6 (WDR6) from Homo sapiens (Human).